Consider the following 144-residue polypeptide: Large ribosomal subunit protein uL16 (144 aa).

A compositionally biased stretch (basic residues) spans 1-14 (MLTPKRVKHRKQHR). Residues 1–22 (MLTPKRVKHRKQHRPSLAGKAN) are disordered.

It belongs to the universal ribosomal protein uL16 family. In terms of assembly, part of the 50S ribosomal subunit.

In terms of biological role, binds 23S rRNA and is also seen to make contacts with the A and possibly P site tRNAs. This chain is Large ribosomal subunit protein uL16, found in Syntrophomonas wolfei subsp. wolfei (strain DSM 2245B / Goettingen).